We begin with the raw amino-acid sequence, 439 residues long: Rho GTPase-activating protein 1 (439 aa).

The residue at position 1 (Met1) is an N-acetylmethionine. Positions 28-48 (IDEKNWPSDEMPDFPKSDDSK) are enriched in basic and acidic residues. A disordered region spans residues 28-55 (IDEKNWPSDEMPDFPKSDDSKSSSPEPV). 4 positions are modified to phosphoserine: Ser44, Ser47, Ser50, and Ser51. The region spanning 63 to 218 (PYYDIARHQI…QVLKYDDFLK (156 aa)) is the CRAL-TRIO domain. Residue Tyr65 is modified to Phosphotyrosine. Lys80 bears the N6-acetyllysine mark. The short motif at 228–238 (PKPMPPRPPLP) is the SH3-binding element. A Rho-GAP domain is found at 244-431 (VSLQHLQEKS…FLLDHQGELF (188 aa)).

Found in a complex with XPO7, EIF4A1, ARHGAP1, VPS26A, VPS29, VPS35 and SFN. Interacts with BNIPL.

The protein resides in the cytoplasm. GTPase activator for the Rho, Rac and Cdc42 proteins, converting them to the putatively inactive GDP-bound state. Cdc42 seems to be the preferred substrate. The chain is Rho GTPase-activating protein 1 (Arhgap1) from Mus musculus (Mouse).